Reading from the N-terminus, the 390-residue chain is Probable purine permease 10 (390 aa).

Helical transmembrane passes span Trp44–Leu64, Leu78–Phe98, Val117–Gly137, Tyr140–Phe160, Leu169–Phe189, Tyr204–Leu224, Val241–Phe261, Leu287–Glu307, Phe312–Phe332, and Met336–Tyr356. The segment at Glu370–Lys390 is disordered.

Belongs to the purine permeases (TC 2.A.7.14) family.

Its subcellular location is the membrane. This is Probable purine permease 10 (PUP10) from Arabidopsis thaliana (Mouse-ear cress).